We begin with the raw amino-acid sequence, 463 residues long: Protein phosphatase PP2A regulatory subunit B (463 aa).

2 WD repeats span residues 27–66 (TEAD…KGCE) and 87–128 (EIEE…LKVV). Position 134 is a phosphoserine (Ser134). WD repeat units follow at residues 174–212 (AHAY…HSFN), 223–263 (ELTE…LCDN), 282–320 (EIIS…APVK), and 337–378 (ENDC…PGDR).

It belongs to the phosphatase 2A regulatory subunit B family. In terms of assembly, PP2A exists in several trimeric forms, all of which consist of a core composed of a catalytic subunit associated with a 65 kDa (PR65) (Subunit A) and a 55 kDa (PR55) (Subunit B) regulatory subunit.

Its function is as follows. Phosphatase 2A affects a variety of biological processes in the cell such as transcription, cell cycle progression and cellular morphogenesis, and provides an initial identification of critical substrates for this phosphatase. The regulatory subunit may direct the catalytic subunit to distinct, albeit overlapping, subsets of substrates. This chain is Protein phosphatase PP2A regulatory subunit B (pab1), found in Schizosaccharomyces pombe (strain 972 / ATCC 24843) (Fission yeast).